A 217-amino-acid polypeptide reads, in one-letter code: 3-isopropylmalate dehydratase small subunit (217 aa).

The protein belongs to the LeuD family. LeuD type 1 subfamily. As to quaternary structure, heterodimer of LeuC and LeuD.

It carries out the reaction (2R,3S)-3-isopropylmalate = (2S)-2-isopropylmalate. It functions in the pathway amino-acid biosynthesis; L-leucine biosynthesis; L-leucine from 3-methyl-2-oxobutanoate: step 2/4. Catalyzes the isomerization between 2-isopropylmalate and 3-isopropylmalate, via the formation of 2-isopropylmaleate. The protein is 3-isopropylmalate dehydratase small subunit of Paracidovorax citrulli (strain AAC00-1) (Acidovorax citrulli).